A 213-amino-acid chain; its full sequence is StAR-related lipid transfer protein 5 (213 aa).

An START domain is found at 1 to 213 (MDLATAAQVS…LEKAVKKFFG (213 aa)).

Its function is as follows. May be involved in the intracellular transport of sterols or other lipids. May bind cholesterol or other sterols. The protein is StAR-related lipid transfer protein 5 (STARD5) of Bos taurus (Bovine).